A 293-amino-acid chain; its full sequence is ATP synthase gamma chain (293 aa).

Belongs to the ATPase gamma chain family. As to quaternary structure, F-type ATPases have 2 components, CF(1) - the catalytic core - and CF(0) - the membrane proton channel. CF(1) has five subunits: alpha(3), beta(3), gamma(1), delta(1), epsilon(1). CF(0) has three main subunits: a, b and c.

The protein resides in the cell membrane. In terms of biological role, produces ATP from ADP in the presence of a proton gradient across the membrane. The gamma chain is believed to be important in regulating ATPase activity and the flow of protons through the CF(0) complex. In Streptococcus sanguinis, this protein is ATP synthase gamma chain.